The primary structure comprises 320 residues: Beta-sarcoglycan (320 aa).

Over residues 1-10 the composition is skewed to low complexity; sequence MAAAAAAAAA. The tract at residues 1 to 34 is disordered; sequence MAAAAAAAAATEQQSSNGPVKKSMREKAVERRNV. At 1–67 the chain is on the cytoplasmic side; it reads MAAAAAAAAA…GLRGRKGNLA (67 aa). Residues 23–34 show a composition bias toward basic and acidic residues; sequence SMREKAVERRNV. Residues 68–88 form a helical; Signal-anchor for type II membrane protein membrane-spanning segment; that stretch reads ICVIVLLFILAVINLLITLVI. The Extracellular portion of the chain corresponds to 89–320; that stretch reads WAVIRIGPNG…VADNPCGNTH (232 aa). N-linked (GlcNAc...) asparagine glycosylation is found at Asn160, Asn213, and Asn260. 2 disulfides stabilise this stretch: Cys290–Cys316 and Cys292–Cys309.

It belongs to the sarcoglycan beta/delta/gamma/zeta family. In terms of assembly, cross-link to form 2 major subcomplexes: one consisting of SGCB, SGCD and SGCG and the other consisting of SGCB and SGCD. The association between SGCB and SGCG is particularly strong while SGCA is loosely associated with the other sarcoglycans. Post-translationally, disulfide bonds are present.

The protein localises to the cell membrane. It is found in the sarcolemma. The protein resides in the cytoplasm. It localises to the cytoskeleton. Its function is as follows. Component of the sarcoglycan complex, a subcomplex of the dystrophin-glycoprotein complex which forms a link between the F-actin cytoskeleton and the extracellular matrix. In Mesocricetus auratus (Golden hamster), this protein is Beta-sarcoglycan (SGCB).